Here is a 613-residue protein sequence, read N- to C-terminus: Laccase 1 (613 aa).

An N-terminal signal peptide occupies residues 1 to 20 (MSSSVRLLLIVALLYTNSWA). 3 Plastocyanin-like domains span residues 29 to 142 (ITWE…IRPK), 171 to 359 (YLVV…MRVP), and 468 to 598 (DATC…ILDG). N74 is a glycosylation site (N-linked (GlcNAc...) asparagine). Residues H78, H80, H122, and H124 each coordinate Cu cation. Residues N256, N279, and N484 are each glycosylated (N-linked (GlcNAc...) asparagine). Cu cation-binding residues include H506, H509, and H511. N-linked (GlcNAc...) asparagine glycosylation is present at N526. Positions 580, 581, 582, and 586 each coordinate Cu cation.

It belongs to the multicopper oxidase family. Cu cation is required as a cofactor.

It is found in the cell surface. It functions in the pathway pigment biosynthesis. Functionally, laccase; part of the Pks1 gene cluster that mediates the biosynthesis of an anthraquinone derivative pigment that contributes to conidial pigmentation that provides protection from UV radiation, heat and cold stress. The polyketide synthase Pks1 produces 1-acetyl-2,4,6,8-tetrahydroxy-9,10-anthraquinone though condensation of acetyl-CoA with malonyl-CoA. The dehydratase EthD and the laccase Mlac1 further convert the anthraquinone derivative into the final conidial pigment. This Metarhizium acridum (strain CQMa 102) protein is Laccase 1.